A 225-amino-acid polypeptide reads, in one-letter code: MRIDIITVLPEMIEGFFNCSIMKRAQNKGLAEIHIHNLRDYTEDKYRRVDDYPFGGFAGMVMKIEPIERCINALKAERDYDEVIFTTPDGEQFNQPMANSLSLAQNLIILCGHFKGIDYRIREHLITKEISIGDYVLTGGELAAAVMADAIVRIIPGVISDEQSALSDSFQDNLLAAPVYTRPADYKGWKVPDILLSGHEAKIKEWELQQSLERTKKLRPDLLED.

S-adenosyl-L-methionine-binding positions include Gly112 and Ile132 to Leu137.

The protein belongs to the RNA methyltransferase TrmD family. In terms of assembly, homodimer.

The protein localises to the cytoplasm. The catalysed reaction is guanosine(37) in tRNA + S-adenosyl-L-methionine = N(1)-methylguanosine(37) in tRNA + S-adenosyl-L-homocysteine + H(+). Specifically methylates guanosine-37 in various tRNAs. The chain is tRNA (guanine-N(1)-)-methyltransferase from Bacteroides thetaiotaomicron (strain ATCC 29148 / DSM 2079 / JCM 5827 / CCUG 10774 / NCTC 10582 / VPI-5482 / E50).